The chain runs to 383 residues: Transposase InsI for insertion sequence element IS30C (383 aa).

An Integrase catalytic domain is found at 213–379; it reads VNGTPIHERS…TPKEIIERGV (167 aa).

The protein belongs to the transposase IS30 family.

Its function is as follows. Required for the transposition of the insertion element. This Escherichia coli (strain K12) protein is Transposase InsI for insertion sequence element IS30C (insI3).